A 555-amino-acid polypeptide reads, in one-letter code: Urocanate hydratase (555 aa).

NAD(+) is bound by residues 52–53 (GG), glutamine 130, 176–178 (GMG), glutamate 196, arginine 201, 242–243 (NA), 263–267 (QTSAH), 273–274 (YL), and tyrosine 322. Residue cysteine 410 is part of the active site. NAD(+) is bound at residue glycine 492.

It belongs to the urocanase family. NAD(+) is required as a cofactor.

Its subcellular location is the cytoplasm. It carries out the reaction 4-imidazolone-5-propanoate = trans-urocanate + H2O. The protein operates within amino-acid degradation; L-histidine degradation into L-glutamate; N-formimidoyl-L-glutamate from L-histidine: step 2/3. In terms of biological role, catalyzes the conversion of urocanate to 4-imidazolone-5-propionate. The chain is Urocanate hydratase from Shewanella baltica (strain OS155 / ATCC BAA-1091).